A 216-amino-acid polypeptide reads, in one-letter code: Large ribosomal subunit protein uL3 (216 aa).

A disordered region spans residues 119–143; that stretch reads GYQGNIHKDGQSRGPMAHGSRYHRR.

The protein belongs to the universal ribosomal protein uL3 family. Part of the 50S ribosomal subunit. Forms a cluster with proteins L14 and L19.

Its function is as follows. One of the primary rRNA binding proteins, it binds directly near the 3'-end of the 23S rRNA, where it nucleates assembly of the 50S subunit. In Levilactobacillus brevis (strain ATCC 367 / BCRC 12310 / CIP 105137 / JCM 1170 / LMG 11437 / NCIMB 947 / NCTC 947) (Lactobacillus brevis), this protein is Large ribosomal subunit protein uL3.